The primary structure comprises 524 residues: Coatomer subunit delta-1 (524 aa).

A disordered region spans residues 215–244 (MDMDSFASKPKGGRPSAAATAPGKGLGMKL). Positions 283–524 (SDPVTVTIEE…RLVAANYQVV (242 aa)) constitute an MHD domain.

The protein belongs to the adaptor complexes medium subunit family. Delta-COP subfamily. As to quaternary structure, oligomeric complex that consists of at least the alpha, beta, beta', gamma, delta, epsilon and zeta subunits.

The protein localises to the cytoplasm. Its subcellular location is the golgi apparatus membrane. It localises to the cytoplasmic vesicle. It is found in the COPI-coated vesicle membrane. Functionally, the coatomer is a cytosolic protein complex that binds to dilysine motifs and reversibly associates with Golgi non-clathrin-coated vesicles, which further mediate biosynthetic protein transport from the ER, via the Golgi up to the trans Golgi network. Coatomer complex is required for budding from Golgi membranes, and is essential for the retrograde Golgi-to-ER transport of dilysine-tagged proteins. The protein is Coatomer subunit delta-1 of Oryza sativa subsp. japonica (Rice).